The chain runs to 258 residues: Chaperone protein caf1M (258 aa).

An N-terminal signal peptide occupies residues 1–20 (MILNRLSTLGIITFGMLSFA). Cysteine 121 and cysteine 160 are oxidised to a cystine.

Belongs to the periplasmic pilus chaperone family.

The protein localises to the periplasm. Functionally, has a stimulatory role for the envelope antigen F1 secretion. It seems to interact with the subunit polypeptide and to prevent it from digestion by a protease. This is Chaperone protein caf1M (caf1M) from Yersinia pestis.